A 391-amino-acid polypeptide reads, in one-letter code: MVHPHLSRTKRTFFSHSSQMISRHIRKTNSLAFVRALSASETAVTPRRKRTVFTDELNKGPSFEDFVSGKAADVFVDPLEAARKDPEAKLPKWLKVPIPKGRSFHSVKKDVRELKLATVCEEAKCPNISECWGGKKSEATATIMLLGDTCTRGCRFCSVKTSRTPAKPDPMEPENTAEAISRWGLGYVVLTTVDRDDLADGGAAHLAETVRLIKQKAPQILVEVLGGDFRGDLTSCDTLAVSGLDVYAHNLETVEALTPHVRDRRATYRQSLSILERAKQAKPSLITKTSLMLGFGETDEQIMQTLRDLRGIGCDVVTFGQYMRPTKRHMKVVEYVRPEKFDYWKEVALEMGFLYVASGPLVRSSYKAGEAFIENVLRKRKHNVGDSPRLA.

A mitochondrion-targeting transit peptide spans 1 to 44 (MVHPHLSRTKRTFFSHSSQMISRHIRKTNSLAFVRALSASETAV). Positions 120, 125, 131, 150, 154, 157, and 365 each coordinate [4Fe-4S] cluster. Positions 135–354 (KKSEATATIM…KEVALEMGFL (220 aa)) constitute a Radical SAM core domain.

Belongs to the radical SAM superfamily. Lipoyl synthase family. [4Fe-4S] cluster is required as a cofactor.

Its subcellular location is the mitochondrion. The enzyme catalyses [[Fe-S] cluster scaffold protein carrying a second [4Fe-4S](2+) cluster] + N(6)-octanoyl-L-lysyl-[protein] + 2 oxidized [2Fe-2S]-[ferredoxin] + 2 S-adenosyl-L-methionine + 4 H(+) = [[Fe-S] cluster scaffold protein] + N(6)-[(R)-dihydrolipoyl]-L-lysyl-[protein] + 4 Fe(3+) + 2 hydrogen sulfide + 2 5'-deoxyadenosine + 2 L-methionine + 2 reduced [2Fe-2S]-[ferredoxin]. Its pathway is protein modification; protein lipoylation via endogenous pathway; protein N(6)-(lipoyl)lysine from octanoyl-[acyl-carrier-protein]: step 2/2. Functionally, catalyzes the radical-mediated insertion of two sulfur atoms into the C-6 and C-8 positions of the octanoyl moiety bound to the lipoyl domains of lipoate-dependent enzymes, thereby converting the octanoylated domains into lipoylated derivatives. The chain is Lipoyl synthase, mitochondrial from Clavispora lusitaniae (strain ATCC 42720) (Yeast).